The sequence spans 171 residues: 3-hydroxydecanoyl-[acyl-carrier-protein] dehydratase (171 aa).

H70 is an active-site residue.

The protein belongs to the thioester dehydratase family. FabA subfamily. As to quaternary structure, homodimer.

Its subcellular location is the cytoplasm. It carries out the reaction a (3R)-hydroxyacyl-[ACP] = a (2E)-enoyl-[ACP] + H2O. The enzyme catalyses (3R)-hydroxydecanoyl-[ACP] = (2E)-decenoyl-[ACP] + H2O. It catalyses the reaction (2E)-decenoyl-[ACP] = (3Z)-decenoyl-[ACP]. It functions in the pathway lipid metabolism; fatty acid biosynthesis. Its function is as follows. Necessary for the introduction of cis unsaturation into fatty acids. Catalyzes the dehydration of (3R)-3-hydroxydecanoyl-ACP to E-(2)-decenoyl-ACP and then its isomerization to Z-(3)-decenoyl-ACP. Can catalyze the dehydratase reaction for beta-hydroxyacyl-ACPs with saturated chain lengths up to 16:0, being most active on intermediate chain length. In Colwellia psychrerythraea (strain 34H / ATCC BAA-681) (Vibrio psychroerythus), this protein is 3-hydroxydecanoyl-[acyl-carrier-protein] dehydratase.